The following is a 370-amino-acid chain: Queuine tRNA-ribosyltransferase (370 aa).

The Proton acceptor role is filled by Asp-89. Residues 89 to 93, Asp-143, Gln-187, and Gly-214 contribute to the substrate site; that span reads DSGGF. Residues 245-251 are RNA binding; the sequence is GVGKPED. The Nucleophile role is filled by Asp-264. The tract at residues 269–273 is RNA binding; important for wobble base 34 recognition; sequence TRNAR. Residues Cys-302, Cys-304, Cys-307, and His-333 each coordinate Zn(2+).

This sequence belongs to the queuine tRNA-ribosyltransferase family. As to quaternary structure, homodimer. Within each dimer, one monomer is responsible for RNA recognition and catalysis, while the other monomer binds to the replacement base PreQ1. The cofactor is Zn(2+).

It carries out the reaction 7-aminomethyl-7-carbaguanine + guanosine(34) in tRNA = 7-aminomethyl-7-carbaguanosine(34) in tRNA + guanine. The protein operates within tRNA modification; tRNA-queuosine biosynthesis. Catalyzes the base-exchange of a guanine (G) residue with the queuine precursor 7-aminomethyl-7-deazaguanine (PreQ1) at position 34 (anticodon wobble position) in tRNAs with GU(N) anticodons (tRNA-Asp, -Asn, -His and -Tyr). Catalysis occurs through a double-displacement mechanism. The nucleophile active site attacks the C1' of nucleotide 34 to detach the guanine base from the RNA, forming a covalent enzyme-RNA intermediate. The proton acceptor active site deprotonates the incoming PreQ1, allowing a nucleophilic attack on the C1' of the ribose to form the product. After dissociation, two additional enzymatic reactions on the tRNA convert PreQ1 to queuine (Q), resulting in the hypermodified nucleoside queuosine (7-(((4,5-cis-dihydroxy-2-cyclopenten-1-yl)amino)methyl)-7-deazaguanosine). In Baumannia cicadellinicola subsp. Homalodisca coagulata, this protein is Queuine tRNA-ribosyltransferase.